A 130-amino-acid chain; its full sequence is Small ribosomal subunit protein uS8 (130 aa).

This sequence belongs to the universal ribosomal protein uS8 family. As to quaternary structure, part of the 30S ribosomal subunit.

One of the primary rRNA binding proteins, it binds directly to 16S rRNA central domain where it helps coordinate assembly of the platform of the 30S subunit. In Caldivirga maquilingensis (strain ATCC 700844 / DSM 13496 / JCM 10307 / IC-167), this protein is Small ribosomal subunit protein uS8.